The following is a 208-amino-acid chain: Uracil phosphoribosyltransferase (208 aa).

5-phospho-alpha-D-ribose 1-diphosphate-binding positions include arginine 78, arginine 103, and 130–138 (DPMLATGGS). Uracil-binding positions include isoleucine 193 and 198-200 (GDA). Aspartate 199 lines the 5-phospho-alpha-D-ribose 1-diphosphate pocket.

The protein belongs to the UPRTase family. It depends on Mg(2+) as a cofactor.

It carries out the reaction UMP + diphosphate = 5-phospho-alpha-D-ribose 1-diphosphate + uracil. It functions in the pathway pyrimidine metabolism; UMP biosynthesis via salvage pathway; UMP from uracil: step 1/1. Allosterically activated by GTP. In terms of biological role, catalyzes the conversion of uracil and 5-phospho-alpha-D-ribose 1-diphosphate (PRPP) to UMP and diphosphate. This Yersinia enterocolitica serotype O:8 / biotype 1B (strain NCTC 13174 / 8081) protein is Uracil phosphoribosyltransferase.